The sequence spans 292 residues: MSPREIVLKETNQIDFISNQSIFDISPISGWKPFAPTDQILGIFIVFVLLLTFFIFYKLKLKKADSLKNNSYFLLLFQMLFVWVQDTTADLLGEENKKFAPYFLMLLLYIVSSNLVSLLGGISPPTSSLTFTFSLGLATFIGIVVMGIRYQRWNFFKEFAFGITVKGKKYSTFIPNPFSILSGFAPLFSISLRLWGNILAGTVILALFYNFWIFIFSSINNQPLALSLGTVFAGLITPVLHIYFDVIAGVLQGYVFVMLTYNYWAKMRNQGLENNNASELHFKGIKVIQENI.

7 helical membrane-spanning segments follow: residues 39–59 (QILG…FYKL), 73–93 (FLLL…DLLG), 102–122 (YFLM…LGGI), 128–148 (SLTF…VMGI), 172–192 (TFIP…SISL), 196–216 (GNIL…IFIF), and 231–251 (VFAG…AGVL).

It belongs to the ATPase A chain family. As to quaternary structure, F-type ATPases have 2 components, CF(1) - the catalytic core - and CF(0) - the membrane proton channel. CF(1) has five subunits: alpha(3), beta(3), gamma(1), delta(1), epsilon(1). CF(0) has three main subunits: a(1), b(2) and c(9-12). The alpha and beta chains form an alternating ring which encloses part of the gamma chain. CF(1) is attached to CF(0) by a central stalk formed by the gamma and epsilon chains, while a peripheral stalk is formed by the delta and b chains.

It is found in the cell membrane. Key component of the proton channel; it plays a direct role in the translocation of protons across the membrane. The chain is ATP synthase subunit a from Mycoplasma genitalium (strain ATCC 33530 / DSM 19775 / NCTC 10195 / G37) (Mycoplasmoides genitalium).